Here is a 260-residue protein sequence, read N- to C-terminus: Thiazole synthase (260 aa).

Lysine 100 functions as the Schiff-base intermediate with DXP in the catalytic mechanism. 1-deoxy-D-xylulose 5-phosphate contacts are provided by residues glycine 161, 187–188 (AG), and 209–210 (NT).

Belongs to the ThiG family. In terms of assembly, homotetramer. Forms heterodimers with either ThiH or ThiS.

It is found in the cytoplasm. It catalyses the reaction [ThiS sulfur-carrier protein]-C-terminal-Gly-aminoethanethioate + 2-iminoacetate + 1-deoxy-D-xylulose 5-phosphate = [ThiS sulfur-carrier protein]-C-terminal Gly-Gly + 2-[(2R,5Z)-2-carboxy-4-methylthiazol-5(2H)-ylidene]ethyl phosphate + 2 H2O + H(+). It participates in cofactor biosynthesis; thiamine diphosphate biosynthesis. Functionally, catalyzes the rearrangement of 1-deoxy-D-xylulose 5-phosphate (DXP) to produce the thiazole phosphate moiety of thiamine. Sulfur is provided by the thiocarboxylate moiety of the carrier protein ThiS. In vitro, sulfur can be provided by H(2)S. The protein is Thiazole synthase of Sorangium cellulosum (strain So ce56) (Polyangium cellulosum (strain So ce56)).